A 497-amino-acid polypeptide reads, in one-letter code: Putative zinc finger and SCAN domain-containing protein 5D (497 aa).

The SCAN box domain occupies 41 to 123; the sequence is KAGRRMFSCP…DLLRNNRRPK (83 aa). Residues 148–342 form a disordered region; that stretch reads PASVRDDPRG…GPAGAVSHPN (195 aa). Residues 158–167 show a composition bias toward polar residues; it reads VSSQRASSVN. 2 stretches are compositionally biased toward basic and acidic residues: residues 216-229 and 249-259; these read PTLE…REEN and KEGKEPKKRAS. 5 C2H2-type zinc fingers span residues 352-374, 380-402, 408-430, 436-458, and 464-486; these read FACG…MRSH, FQCN…QRIH, YTCD…KRSH, YKCK…KLIH, and YKCP…QKTH.

Its subcellular location is the nucleus. The protein is Putative zinc finger and SCAN domain-containing protein 5D of Homo sapiens (Human).